Here is a 278-residue protein sequence, read N- to C-terminus: uncharacterized protein (278 aa).

The segment covering 127-151 (PPTPSPPPPPAPTQPTRPTPGPAFF) has biased composition (pro residues). A disordered region spans residues 127-174 (PPTPSPPPPPAPTQPTRPTPGPAFFPQPFKVELHHPTPKTSSLPAPSL). The span at 164–174 (PKTSSLPAPSL) shows a compositional bias: low complexity.

This is an uncharacterized protein from Botryotinia fuckeliana (Noble rot fungus).